We begin with the raw amino-acid sequence, 501 residues long: Glycerol kinase (501 aa).

T12 contributes to the ADP binding site. ATP is bound by residues T12, T13, and S14. Residue T12 participates in sn-glycerol 3-phosphate binding. R16 lines the ADP pocket. Positions 82, 83, 134, and 244 each coordinate sn-glycerol 3-phosphate. Residues R82, E83, Y134, D244, and Q245 each contribute to the glycerol site. Residues T266 and G310 each contribute to the ADP site. Positions 266, 310, 314, and 411 each coordinate ATP. G411 and N415 together coordinate ADP.

Belongs to the FGGY kinase family.

It catalyses the reaction glycerol + ATP = sn-glycerol 3-phosphate + ADP + H(+). The protein operates within polyol metabolism; glycerol degradation via glycerol kinase pathway; sn-glycerol 3-phosphate from glycerol: step 1/1. With respect to regulation, inhibited by fructose 1,6-bisphosphate (FBP). Its function is as follows. Key enzyme in the regulation of glycerol uptake and metabolism. Catalyzes the phosphorylation of glycerol to yield sn-glycerol 3-phosphate. This is Glycerol kinase from Methylorubrum extorquens (strain PA1) (Methylobacterium extorquens).